A 485-amino-acid polypeptide reads, in one-letter code: Ribulose bisphosphate carboxylase large chain (485 aa).

Substrate is bound by residues asparagine 124 and threonine 174. Lysine 176 serves as the catalytic Proton acceptor. Lysine 178 contributes to the substrate binding site. Positions 202, 204, and 205 each coordinate Mg(2+). Residue lysine 202 is modified to N6-carboxylysine. Catalysis depends on histidine 294, which acts as the Proton acceptor. Arginine 295, histidine 327, and serine 379 together coordinate substrate.

It belongs to the RuBisCO large chain family. Type I subfamily. As to quaternary structure, heterohexadecamer of 8 large chains and 8 small chains. It depends on Mg(2+) as a cofactor.

The enzyme catalyses 2 (2R)-3-phosphoglycerate + 2 H(+) = D-ribulose 1,5-bisphosphate + CO2 + H2O. It catalyses the reaction D-ribulose 1,5-bisphosphate + O2 = 2-phosphoglycolate + (2R)-3-phosphoglycerate + 2 H(+). In terms of biological role, ruBisCO catalyzes two reactions: the carboxylation of D-ribulose 1,5-bisphosphate, the primary event in carbon dioxide fixation, as well as the oxidative fragmentation of the pentose substrate. Both reactions occur simultaneously and in competition at the same active site. In Rhodopseudomonas palustris (strain ATCC BAA-98 / CGA009), this protein is Ribulose bisphosphate carboxylase large chain.